The primary structure comprises 239 residues: Cysteine-rich venom protein natrin-1 (239 aa).

Residues 1 to 18 (MIAFSLLCFAAVLQQSFG) form the signal peptide. The region spanning 37 to 165 (VDLHNSLRRR…AWSYFYVCQY (129 aa)) is the SCP domain. Intrachain disulfides connect cysteine 74-cysteine 152, cysteine 91-cysteine 166, cysteine 147-cysteine 163, cysteine 185-cysteine 192, cysteine 188-cysteine 197, cysteine 201-cysteine 234, cysteine 210-cysteine 228, and cysteine 219-cysteine 232. Positions 201–234 (CTIYNKLTNCDSLLKQSSCQDDWIKSNCPASCFC) constitute a ShKT domain.

In terms of tissue distribution, expressed by the venom gland.

Its subcellular location is the secreted. Inhibits calcium-activated potassium channels (KCa1.1/KCNMA1), voltage-gated potassium channel Kv1.3/KCNA3, and the calcium release channel/ryanodine receptor (RyR). Binds specifically to type 1 RyR (RyR1) from skeletal muscle. Inhibit both the binding of ryanodine to RyR1, and RyR1's calcium-channel activity. Inhibits carbachol-induced muscle contraction and weakly blocks muscle contraction evoked by potassium. The chain is Cysteine-rich venom protein natrin-1 from Naja atra (Chinese cobra).